Reading from the N-terminus, the 134-residue chain is ATP synthase epsilon chain (134 aa).

Basic and acidic residues predominate over residues 94–104; the sequence is AKLAKSRAESH. Residues 94 to 115 are disordered; that stretch reads AKLAKSRAESHLEEDDDNTDIN.

This sequence belongs to the ATPase epsilon chain family. F-type ATPases have 2 components, CF(1) - the catalytic core - and CF(0) - the membrane proton channel. CF(1) has five subunits: alpha(3), beta(3), gamma(1), delta(1), epsilon(1). CF(0) has three main subunits: a, b and c.

It is found in the cell membrane. Produces ATP from ADP in the presence of a proton gradient across the membrane. In Staphylococcus epidermidis (strain ATCC 35984 / DSM 28319 / BCRC 17069 / CCUG 31568 / BM 3577 / RP62A), this protein is ATP synthase epsilon chain.